The following is a 148-amino-acid chain: Troponin C (148 aa).

4 EF-hand domains span residues 8-43 (KQFN…LALH), 44-79 (VSDD…KVQE), 81-116 (EDER…LGDD), and 117-148 (LNDD…LMLG). Residues Asp130, Asp132, Ser134, Thr136, and Glu141 each coordinate Ca(2+).

This sequence belongs to the troponin C family.

Troponin is the central regulatory protein of striated muscle contraction. Tn consists of three components: Tn-I which is the inhibitor of actomyosin ATPase, Tn-T which contains the binding site for tropomyosin and Tn-C. The binding of calcium to Tn-C abolishes the inhibitory action of Tn on actin filaments. The polypeptide is Troponin C (Todarodes pacificus (Japanese flying squid)).